The sequence spans 512 residues: Serine--tRNA ligase, cytoplasmic (512 aa).

Met-1 is modified (N-acetylmethionine). Residues 9–61 (RVDKGGDPALIRETQEKRFKDPGLVDQLVKADSEWRRCRFRADNLNKLKNLCS) form an interaction with tRNA region. Ser-241 carries the post-translational modification Phosphoserine. Thr-271 and Arg-302 together coordinate L-serine. ATP is bound by residues 302–304 (RQE) and 318–321 (VHQF). The residue at position 323 (Lys-323) is an N6-acetyllysine. Glu-325 lines the L-serine pocket. ATP is bound at residue 391–394 (ELVS). Asn-427 contacts L-serine. Positions 470–512 (FVKPAPIDQEPSKKQKKQHEGSKKKAKEVPLENQLQSMEVTEA) are disordered. Residues 479 to 499 (EPSKKQKKQHEGSKKKAKEVP) show a composition bias toward basic and acidic residues. Residues 482 to 494 (KKQKKQHEGSKKK) carry the Nuclear localization signal motif. The segment covering 502 to 512 (NQLQSMEVTEA) has biased composition (polar residues). At Ser-506 the chain carries Phosphoserine.

The protein belongs to the class-II aminoacyl-tRNA synthetase family. Type-1 seryl-tRNA synthetase subfamily. In terms of assembly, homodimer. The tRNA molecule may bind across the dimer. Interacts with SIRT2. Interacts with METTL6; interaction is required for the tRNA N(3)-methylcytidine methyltransferase activity of METTL6.

The protein localises to the cytoplasm. Its subcellular location is the nucleus. The enzyme catalyses tRNA(Ser) + L-serine + ATP = L-seryl-tRNA(Ser) + AMP + diphosphate + H(+). It catalyses the reaction tRNA(Sec) + L-serine + ATP = L-seryl-tRNA(Sec) + AMP + diphosphate + H(+). The protein operates within aminoacyl-tRNA biosynthesis; selenocysteinyl-tRNA(Sec) biosynthesis; L-seryl-tRNA(Sec) from L-serine and tRNA(Sec): step 1/1. Its function is as follows. Catalyzes the attachment of serine to tRNA(Ser) in a two-step reaction: serine is first activated by ATP to form Ser-AMP and then transferred to the acceptor end of tRNA(Ser). Is probably also able to aminoacylate tRNA(Sec) with serine, to form the misacylated tRNA L-seryl-tRNA(Sec), which will be further converted into selenocysteinyl-tRNA(Sec). In the nucleus, binds to the VEGFA core promoter and prevents MYC binding and transcriptional activation by MYC. Recruits SIRT2 to the VEGFA promoter, promoting deacetylation of histone H4 at 'Lys-16' (H4K16). Thereby, inhibits the production of VEGFA and sprouting angiogenesis mediated by VEGFA. The protein is Serine--tRNA ligase, cytoplasmic (Sars1) of Mus musculus (Mouse).